The following is a 435-amino-acid chain: MAASDTERDGLAPEKTSPDRDKKKEQSDVSVSPRASKHHYSRSRSRSRERKRKSDNEGRKHRSRSRSKEARRHESKDKSSKKHKSEEHNDKEHSSDKGRERLNSSENGEDRHKRKERKSSRGRSHSRSRSRERRHRSRSRERKKSRSRSRERKKSRSRSRERKKSRSRSRERKRRIRSRSRSRSRHRHRTRSRSRTRSRSRDRKKRIEKPRRFSRSLSRTPSPPPFRGRNTAMDAQEALARRLERAKKLQEQREKEMVEKQKQQEIAAAAATGGSVLNVAALLASGTQVTPQIAMAAQMAALQAKALAETGIAVPSYYNPAAVNPMKFAEQEKKKRKMLWQGKKEGDKSQSAEIWEKLNFGNKDQNVKFRKLMGIKSEDEAGCSSVDEESYKTLKQQEEVFRNLDAQYEMARSQTHTQRGMGLGFTSSMRGMDAV.

The segment covering 1–27 (MAASDTERDGLAPEKTSPDRDKKKEQS) has biased composition (basic and acidic residues). The segment at 1 to 230 (MAASDTERDG…PSPPPFRGRN (230 aa)) is disordered. Alanine 2 is subject to N-acetylalanine. The residue at position 4 (serine 4) is a Phosphoserine. A phosphothreonine mark is found at threonine 6 and threonine 16. 3 positions are modified to phosphoserine: serine 17, serine 30, and serine 32. Basic residues predominate over residues 35-51 (ASKHHYSRSRSRSRERK). The span at 66 to 111 (RSKEARRHESKDKSSKKHKSEEHNDKEHSSDKGRERLNSSENGEDR) shows a compositional bias: basic and acidic residues. Position 104 is a phosphoserine (serine 104). Residues 112–214 (HKRKERKSSR…KRIEKPRRFS (103 aa)) show a composition bias toward basic residues. Residues 230–270 (NTAMDAQEALARRLERAKKLQEQREKEMVEKQKQQEIAAAA) adopt a coiled-coil conformation. Lysine 376 is covalently cross-linked (Glycyl lysine isopeptide (Lys-Gly) (interchain with G-Cter in SUMO1); alternate). Lysine 376 is covalently cross-linked (Glycyl lysine isopeptide (Lys-Gly) (interchain with G-Cter in SUMO2); alternate). Serine 377 is subject to Phosphoserine.

This sequence belongs to the RSRC2 family.

This chain is Arginine/serine-rich coiled-coil protein 2 (RSRC2), found in Pongo abelii (Sumatran orangutan).